The chain runs to 186 residues: Ribosome-recycling factor (186 aa).

The protein belongs to the RRF family.

The protein resides in the cytoplasm. Responsible for the release of ribosomes from messenger RNA at the termination of protein biosynthesis. May increase the efficiency of translation by recycling ribosomes from one round of translation to another. The chain is Ribosome-recycling factor from Bartonella quintana (strain Toulouse) (Rochalimaea quintana).